Reading from the N-terminus, the 1038-residue chain is Protein argonaute 1D (1038 aa).

2 disordered regions span residues 1-58 and 110-134; these read MGSR…GAAP and APHE…PRSL. 2 stretches are compositionally biased toward gly residues: residues 18–29 and 43–52; these read RGGGRGGGGRGR and GHGGRGGAGY. The segment covering 115-134 has biased composition (low complexity); sequence PANVSSPEAASPEASSPRSL. The 114-residue stretch at 380 to 493 folds into the PAZ domain; the sequence is PVIDFVIQLL…LPMEVCKIVE (114 aa). In terms of domain architecture, Piwi spans 669–990; the sequence is LLIGLLPDNN…AAFRARFYME (322 aa). The tract at residues 992–1021 is disordered; that stretch reads DSSDSGSMASGRGGGSSTSRSTRAAGGGAV.

It belongs to the argonaute family. Ago subfamily.

In terms of biological role, probably involved in the RNA silencing pathway. May bind to short RNAs such as microRNAs (miRNAs) or short interfering RNAs (siRNAs), and represses the translation of mRNAs which are complementary to them. The polypeptide is Protein argonaute 1D (AGO1D) (Oryza sativa subsp. japonica (Rice)).